A 325-amino-acid polypeptide reads, in one-letter code: Protein TMED8 (325 aa).

Residues 1-78 (MSDLQAAEGP…MVSPVSKDAT (78 aa)) form a disordered region. Residues 159–323 (PPCIWTFAKV…NKTLYFHIYY (165 aa)) enclose the GOLD domain. An N6-acetyllysine modification is found at Lys169. The disordered stretch occupies residues 232 to 267 (TVQVSDSSDDEDEEEEEEEEIEEPVPAGDVERGSRS). Residues 238–254 (SSDDEDEEEEEEEEIEE) are compositionally biased toward acidic residues.

The polypeptide is Protein TMED8 (TMED8) (Homo sapiens (Human)).